Reading from the N-terminus, the 628-residue chain is Chaperone protein HtpG (628 aa).

Residues 1–337 (MSEKKYTFET…SADLPLNVSR (337 aa)) form an a; substrate-binding region. Positions 338 to 554 (EILQHNKVID…DYGMSLHMQK (217 aa)) are b. The interval 555–628 (MMEEAGQSFM…FVKLVNKYIR (74 aa)) is c.

The protein belongs to the heat shock protein 90 family. As to quaternary structure, homodimer.

The protein localises to the cytoplasm. In terms of biological role, molecular chaperone. Has ATPase activity. The chain is Chaperone protein HtpG from Francisella tularensis subsp. tularensis (strain WY96-3418).